Reading from the N-terminus, the 288-residue chain is Quinate/shikimate dehydrogenase (288 aa).

Residues lysine 71 and aspartate 107 each coordinate substrate. NAD(+)-binding positions include 132–135 (AGGA), 155–158 (NRRD), lysine 205, 232–235 (CVYN), and glycine 255.

Belongs to the shikimate dehydrogenase family. Homodimer.

It catalyses the reaction L-quinate + NAD(+) = 3-dehydroquinate + NADH + H(+). The enzyme catalyses L-quinate + NADP(+) = 3-dehydroquinate + NADPH + H(+). It carries out the reaction shikimate + NADP(+) = 3-dehydroshikimate + NADPH + H(+). The catalysed reaction is shikimate + NAD(+) = 3-dehydroshikimate + NADH + H(+). It participates in metabolic intermediate biosynthesis; chorismate biosynthesis; chorismate from D-erythrose 4-phosphate and phosphoenolpyruvate: step 4/7. Functionally, the actual biological function of YdiB remains unclear, nor is it known whether 3-dehydroshikimate or quinate represents the natural substrate. Catalyzes the reversible NAD-dependent reduction of both 3-dehydroshikimate (DHSA) and 3-dehydroquinate to yield shikimate (SA) and quinate, respectively. It can use both NAD or NADP for catalysis, however it has higher catalytic efficiency with NAD. The polypeptide is Quinate/shikimate dehydrogenase (Escherichia coli O1:K1 / APEC).